Consider the following 196-residue polypeptide: Putative lipopolysaccharide biosynthesis O-acetyl transferase WbbJ (196 aa).

Belongs to the transferase hexapeptide repeat family.

The protein operates within bacterial outer membrane biogenesis; lipopolysaccharide biosynthesis. In terms of biological role, putative O-acetyltransferase that transfers an O-acetyl group to the O antigen. This chain is Putative lipopolysaccharide biosynthesis O-acetyl transferase WbbJ (wbbJ), found in Escherichia coli (strain K12).